Consider the following 322-residue polypeptide: tRNA U34 carboxymethyltransferase (322 aa).

Residues Lys90, Trp104, Lys109, Gly129, Asp151 to Ser153, Ile180 to Glu181, Met196, Tyr200, and Arg315 each bind carboxy-S-adenosyl-L-methionine.

It belongs to the class I-like SAM-binding methyltransferase superfamily. CmoB family. As to quaternary structure, homotetramer.

The catalysed reaction is carboxy-S-adenosyl-L-methionine + 5-hydroxyuridine(34) in tRNA = 5-carboxymethoxyuridine(34) in tRNA + S-adenosyl-L-homocysteine + H(+). Functionally, catalyzes carboxymethyl transfer from carboxy-S-adenosyl-L-methionine (Cx-SAM) to 5-hydroxyuridine (ho5U) to form 5-carboxymethoxyuridine (cmo5U) at position 34 in tRNAs. The protein is tRNA U34 carboxymethyltransferase of Cellvibrio japonicus (strain Ueda107) (Pseudomonas fluorescens subsp. cellulosa).